Reading from the N-terminus, the 198-residue chain is Rac-like GTP-binding protein ARAC3 (198 aa).

GTP is bound by residues 13-21 (GDGAVGKTC), 31-38 (FPTDYVPT), 60-64 (DTAGQ), and 118-121 (TKLD). An Effector region motif is present at residues 35 to 43 (YVPTVFDNF). Cysteine 158 carries the S-palmitoyl cysteine lipid modification. Cysteine 195 bears the Cysteine methyl ester mark. Cysteine 195 carries S-geranylgeranyl cysteine lipidation. The propeptide at 196-198 (SIL) is removed in mature form.

This sequence belongs to the small GTPase superfamily. Rho family. In terms of assembly, interacts with Rho GDP-dissociation inhibitor 1 and ICR1. Binds to SPK1 when in the inactive GDP-bound form. Ubiquitous. Preferentially expressed at the tip of root hairs.

It is found in the cytoplasm. Its subcellular location is the cell membrane. Its function is as follows. Inactive GDP-bound Rho GTPases reside in the cytosol, are found in a complex with Rho GDP-dissociation inhibitors (Rho GDIs), and are released from the GDI protein in order to translocate to membranes upon activation. Involved in cell polarity control during the actin-dependent tip growth of root hairs, thus regulating root hair length and root hair initiation. Contributes, in a SPK1-dependent manner, to the prevention of cortical microtubules organization into parallel arrays oriented perpendicular to the axis of cell elongation to limit anisotropic cell growth during petal development. SPK1-dependent activation is required for auxin-mediated inhibition of PIN2 internalization during gravitropic responses. The polypeptide is Rac-like GTP-binding protein ARAC3 (Arabidopsis thaliana (Mouse-ear cress)).